Reading from the N-terminus, the 128-residue chain is MRHRKSGRQLNRNSSHRQAMFRNLASALVSHEIIKTTLPKAKELRRVVEPLITLAKVDSVANRRLAFARTRNVETVAKLFNELGPRFAQRAGGYTRILKCGFRAGDNAPMAYIELVDRPEVAEATTEE.

Belongs to the bacterial ribosomal protein bL17 family. Part of the 50S ribosomal subunit. Contacts protein L32.

The polypeptide is Large ribosomal subunit protein bL17 (Haemophilus influenzae (strain 86-028NP)).